A 364-amino-acid polypeptide reads, in one-letter code: MAQQTPLYEQHTLCGARMVDFHSWMMPLHYGSQIDEHHAVRTDAGMFDVSHMTIVDLRGSRTREFLRYLLANDVAKLTKSGKALYSGMLNASGGVIDDLIVYYFTEDFFRLVVNSATREKDLSWITQHAEPFGIEITVRDDLSMIAVQGPNAQAKAATLFNDAQRQVVEGMKPFFGVQVGDLFIATTGYTGEAGYEIALPNEKAADFWRALVEAGVKPCGLGARDTLRLEAGMNLYGQEMDETISPLAANMGWTIAWEPTDRDFIGREALEVQREHGTEKLVGLVMTEKGVLRNELPVRFTDAQGNQHEGIITSGTFSPTLGYSIALARVPEGIGETAIVQIRNREMPVKVTKPVFVRNGKAVA.

This sequence belongs to the GcvT family. In terms of assembly, the glycine cleavage system is composed of four proteins: P, T, L and H.

It catalyses the reaction N(6)-[(R)-S(8)-aminomethyldihydrolipoyl]-L-lysyl-[protein] + (6S)-5,6,7,8-tetrahydrofolate = N(6)-[(R)-dihydrolipoyl]-L-lysyl-[protein] + (6R)-5,10-methylene-5,6,7,8-tetrahydrofolate + NH4(+). The glycine cleavage system catalyzes the degradation of glycine. In Shigella flexneri serotype 5b (strain 8401), this protein is Aminomethyltransferase.